The primary structure comprises 611 residues: Chaperone protein DnaK (611 aa).

A Phosphothreonine; by autocatalysis modification is found at Thr173. Residues 579–592 show a composition bias toward low complexity; sequence AAGQAEGAQGAQDA. The interval 579-611 is disordered; sequence AAGQAEGAQGAQDAGAKKDNVVDAEFEEVKEDK. The segment covering 600-611 has biased composition (acidic residues); it reads VDAEFEEVKEDK.

The protein belongs to the heat shock protein 70 family.

Acts as a chaperone. In Bacillus mycoides (strain KBAB4) (Bacillus weihenstephanensis), this protein is Chaperone protein DnaK.